Here is a 214-residue protein sequence, read N- to C-terminus: Uracil phosphoribosyltransferase (214 aa).

5-phospho-alpha-D-ribose 1-diphosphate-binding positions include R81, R106, and 133 to 141; that span reads DPMLATGNS. Residues I196 and 201 to 203 contribute to the uracil site; that span reads GDA. A 5-phospho-alpha-D-ribose 1-diphosphate-binding site is contributed by D202.

It belongs to the UPRTase family. Requires Mg(2+) as cofactor.

The enzyme catalyses UMP + diphosphate = 5-phospho-alpha-D-ribose 1-diphosphate + uracil. It participates in pyrimidine metabolism; UMP biosynthesis via salvage pathway; UMP from uracil: step 1/1. Allosterically activated by GTP. In terms of biological role, catalyzes the conversion of uracil and 5-phospho-alpha-D-ribose 1-diphosphate (PRPP) to UMP and diphosphate. This Legionella pneumophila subsp. pneumophila (strain Philadelphia 1 / ATCC 33152 / DSM 7513) protein is Uracil phosphoribosyltransferase.